Reading from the N-terminus, the 485-residue chain is Glutamyl-tRNA(Gln) amidotransferase subunit A (485 aa).

Catalysis depends on charge relay system residues Lys-78 and Ser-153. The Acyl-ester intermediate role is filled by Ser-177.

This sequence belongs to the amidase family. GatA subfamily. As to quaternary structure, heterotrimer of A, B and C subunits.

It carries out the reaction L-glutamyl-tRNA(Gln) + L-glutamine + ATP + H2O = L-glutaminyl-tRNA(Gln) + L-glutamate + ADP + phosphate + H(+). Its function is as follows. Allows the formation of correctly charged Gln-tRNA(Gln) through the transamidation of misacylated Glu-tRNA(Gln) in organisms which lack glutaminyl-tRNA synthetase. The reaction takes place in the presence of glutamine and ATP through an activated gamma-phospho-Glu-tRNA(Gln). The polypeptide is Glutamyl-tRNA(Gln) amidotransferase subunit A (Bacillus cereus (strain ZK / E33L)).